The primary structure comprises 968 residues: MEFLSTSQSLQINFDSQQSEQIQVPIGFDSSQPPQEFEFETTPLNQLPFLKQIDIAASLSFIPASIENLTTENTITVFPVLVGQGAFSQQDSLLQFPVSLQNININNNNNSNFQLGLVPSSPQSSISSPSTIESNYLSNPSSPCQSTPILESSTPFSQKLMSNEQQQQQQPQNFSFPQKQQQAVDLNEFFGLNSVGGGGHFKACFSPDNSFNLYNDLSPEAKSCFKIFAKKCKPTTEHEVFNKVMNLLNNLTLEEIDLIIKSVSRIEKYDTLIAKVFATELDVANFPSINAKLLLQNLLVEIIDQDRKLVYHLFQLDTDHIHSLKNKCSILSISTPASDSLNFSALLQEDSNNNNNNNNNNNNNNNNNNNNNNNNNNNNNNNNNNNNNNNNNNNNNNYNNNYNNNNNNNNNNNNNNNNNNNNNNNNNNCNNSLVNDSNTNIINHTHNLNYNQNQNQNLNNNYNYDYNFTNDTNNNVYHQNNTSPANNSPYVTPVLKDNELHSQLLPQIAHQQPVAVLANYQHNQQQQSPQQIQQQLYNPHLQILSQQTNSNPHNTENIEVPKIKLQPNFQSTTTTTITQQQQQQQQQQQQQQQNTPLISQLIPESIKPKASNKLANNSNGKKVGSSKKVSKSVFPKGIITPQYFSILKDRFGFTMESLEKASNPNGANYIHSLNGSLALVNTCLVPISSEVSTGRDSKNGVVITVKNYGDYTTKLTLEYELVTSNNEVNDDKFSFKKKNLLMVEPGIFYFQYSMNRIDKNEKEVYIRFNLICEGKVIDSIQSPQIRFRNTPSEFDQPNNVQLETLIADQFKTYSDDHSVHVKFVAIANLFKKGIIPKASKDSSSSPTASSAAPGDSSSDGEGDEQSSTSTKKMKKGKPLEVTLKHSSGFTLVIPQHISKAKPEDIWRFPKNLISQTNIPIKKSEGDIIHFPYSYVVEFSALVPRGNYTITFGYEFVNKKANPIHNFVI.

Disordered regions lie at residues 124–177, 348–437, 572–595, 608–627, and 837–877; these read SSIS…FSFP, QEDS…VNDS, TTTT…QQNT, PKAS…GSSK, and KASK…KKGK. Residues 131 to 157 show a composition bias toward polar residues; it reads TIESNYLSNPSSPCQSTPILESSTPFS. Low complexity-rich tracts occupy residues 158-177, 352-431, and 572-593; these read QKLM…FSFP, NNNN…NCNN, and TTTT…QQQQ. Low complexity predominate over residues 841-857; the sequence is DSSSSPTASSAAPGDSS.

This is an uncharacterized protein from Dictyostelium discoideum (Social amoeba).